Here is a 444-residue protein sequence, read N- to C-terminus: MFPWLAYGHISPYLELAKRLTDRGFAIYICSTPINLGFIKKRITGKYSVTIKLVELHLPDTPELPPHYHTTNGLPPHLMATLKRALNGAKPELSNILKTLKPDFVIYDATQTWTAALTVAHNIPAVKFLTSSVSMLAYFCHLFMKPGIEFPFPAIYLSDFEQAKARTAAQDARADAEENDPAAERPNRDCDSIFLVKSSRAIEGKYIDYLFDLMKLKMLPVGMLVEEPVKDDQGDNSNELIQWLGTKSQRSTVLVSFGTEYFLTKEEMEEIAHGLELSEVNFIWVVRFAMGQKIRPDEALPEGFLERVGDRGRIVEGWAPQSEVLAHPSTGGFICHCGWNSVVESIEFGVPVIAMPMHLDQPLNARLVVEIGAGMEVVRDETGKFDRKEIARAIKDAMVEKTGENTRAKMLDVKGRVELKEKQELDEVAELLTQLVTETTQSSN.

His9 acts as the Proton acceptor in catalysis. Residue His9 coordinates an anthocyanidin. Residue Asp108 is the Charge relay of the active site. UDP-alpha-D-glucose-binding residues include Thr130, Ala319, Gln321, His336, Trp339, Asn340, Ser341, Glu344, Asp360, and Gln361.

The protein belongs to the UDP-glycosyltransferase family. As to expression, ubiquitous.

It carries out the reaction beta-D-glucosyl crocetin + UDP-alpha-D-glucose = beta-D-gentiobiosyl crocetin + UDP + H(+). The catalysed reaction is bis(beta-D-glucosyl) crocetin + UDP-alpha-D-glucose = beta-D-gentiobiosyl beta-D-glucosyl crocetin + UDP + H(+). The enzyme catalyses beta-D-gentiobiosyl beta-D-glucosyl crocetin + UDP-alpha-D-glucose = bis(beta-D-gentiobiosyl) crocetin + UDP + H(+). Functionally, glucosyltransferase catalyzing the beta 1-6 glucosylation of the sugar moiety of crocetin glucosyl esters to produce crocetin gentiobiosyl esters. Weak activity toward curcumin glucosides, but no activity with flavonoid glucosides, coumarin glucosides, 4-nitrophenyl glucoside or crocetin. Involved with UGT75L6 in sequential glycosylation of crocetin to crocin (bis(beta-D-gentiobiosyl) crocetin). This is Beta-D-glucosyl crocetin beta-1,6-glucosyltransferase (UGT94E5) from Gardenia jasminoides (Cape jasmine).